The sequence spans 80 residues: Exodeoxyribonuclease 7 small subunit (80 aa).

The protein belongs to the XseB family. As to quaternary structure, heterooligomer composed of large and small subunits.

The protein resides in the cytoplasm. The enzyme catalyses Exonucleolytic cleavage in either 5'- to 3'- or 3'- to 5'-direction to yield nucleoside 5'-phosphates.. Functionally, bidirectionally degrades single-stranded DNA into large acid-insoluble oligonucleotides, which are then degraded further into small acid-soluble oligonucleotides. The sequence is that of Exodeoxyribonuclease 7 small subunit from Rickettsia felis (strain ATCC VR-1525 / URRWXCal2) (Rickettsia azadi).